A 399-amino-acid chain; its full sequence is Glutamyl-tRNA reductase (399 aa).

Substrate contacts are provided by residues 45-48, S101, 106-108, and Q112; these read TCNR and EDQ. C46 serves as the catalytic Nucleophile. 177-182 contacts NADP(+); that stretch reads GFGKIG.

The protein belongs to the glutamyl-tRNA reductase family. In terms of assembly, homodimer.

It carries out the reaction (S)-4-amino-5-oxopentanoate + tRNA(Glu) + NADP(+) = L-glutamyl-tRNA(Glu) + NADPH + H(+). The protein operates within porphyrin-containing compound metabolism; protoporphyrin-IX biosynthesis; 5-aminolevulinate from L-glutamyl-tRNA(Glu): step 1/2. In terms of biological role, catalyzes the NADPH-dependent reduction of glutamyl-tRNA(Glu) to glutamate 1-semialdehyde (GSA). In Clostridium kluyveri (strain ATCC 8527 / DSM 555 / NBRC 12016 / NCIMB 10680 / K1), this protein is Glutamyl-tRNA reductase.